A 367-amino-acid chain; its full sequence is Dihydroorotate dehydrogenase (quinone) (367 aa).

FMN contacts are provided by residues 61–65 and threonine 85; that span reads AGFDK. Position 65 (lysine 65) interacts with substrate. 110 to 114 serves as a coordination point for substrate; it reads NRMGF. FMN contacts are provided by asparagine 138 and asparagine 169. Asparagine 169 contacts substrate. Serine 172 serves as the catalytic Nucleophile. Residue asparagine 174 coordinates substrate. Positions 212 and 240 each coordinate FMN. Position 241 to 242 (241 to 242) interacts with substrate; sequence NT. Residues glycine 263, glycine 292, and 313–314 each bind FMN; that span reads YS.

The protein belongs to the dihydroorotate dehydrogenase family. Type 2 subfamily. As to quaternary structure, monomer. The cofactor is FMN.

The protein localises to the cell membrane. The enzyme catalyses (S)-dihydroorotate + a quinone = orotate + a quinol. It functions in the pathway pyrimidine metabolism; UMP biosynthesis via de novo pathway; orotate from (S)-dihydroorotate (quinone route): step 1/1. Its function is as follows. Catalyzes the conversion of dihydroorotate to orotate with quinone as electron acceptor. The polypeptide is Dihydroorotate dehydrogenase (quinone) (Rhodospirillum rubrum (strain ATCC 11170 / ATH 1.1.1 / DSM 467 / LMG 4362 / NCIMB 8255 / S1)).